We begin with the raw amino-acid sequence, 397 residues long: tRNA(Ile)-lysidine synthase (397 aa).

An ATP-binding site is contributed by 44 to 49 (SGGADS).

This sequence belongs to the tRNA(Ile)-lysidine synthase family.

Its subcellular location is the cytoplasm. It carries out the reaction cytidine(34) in tRNA(Ile2) + L-lysine + ATP = lysidine(34) in tRNA(Ile2) + AMP + diphosphate + H(+). Its function is as follows. Ligates lysine onto the cytidine present at position 34 of the AUA codon-specific tRNA(Ile) that contains the anticodon CAU, in an ATP-dependent manner. Cytidine is converted to lysidine, thus changing the amino acid specificity of the tRNA from methionine to isoleucine. The polypeptide is tRNA(Ile)-lysidine synthase (Rhodopirellula baltica (strain DSM 10527 / NCIMB 13988 / SH1)).